Here is a 154-residue protein sequence, read N- to C-terminus: MTQDYKLQVEAIKCGTVIDHIPAQIGFKLLSLFKLTATDQRITIGLNLPSKRSGRKDLIKIENTFLTEQQANQLAMYAPDATVNRIDNYEVVKKLTLSLPERIDAVLTCPNSNCISHNEPVDSSFTVKAQRGEISLKCKYCEKEFDHLTVLHAD.

Positions 109, 114, 138, and 141 each coordinate Zn(2+).

This sequence belongs to the PyrI family. As to quaternary structure, contains catalytic and regulatory chains. It depends on Zn(2+) as a cofactor.

Its function is as follows. Involved in allosteric regulation of aspartate carbamoyltransferase. This is Aspartate carbamoyltransferase regulatory chain from Yersinia pestis.